A 515-amino-acid chain; its full sequence is Vacuolar fusion protein CCZ1 homolog A (515 aa).

Belongs to the CCZ1 family. In terms of assembly, interacts with MON1.

It is found in the endosome. It localises to the prevacuolar compartment. Functionally, plays an important role in membrane trafficking through the secretory apparatus. In complex with MON1, acts as a guanine exchange factor (GEF) for RABG3F of the Rab7 protein family. Promotes the exchange of GDP to GTP, converting RABG3F from an inactive GDP-bound form into an active GTP-bound form. The RABG3F active form is involved in protein trafficking from prevacuolar compartments (PVCs) to vacuoles. May serve as a linker between Rab5 and Rab7 protein families in PVCs and mediate PVC maturation. The polypeptide is Vacuolar fusion protein CCZ1 homolog A (Arabidopsis thaliana (Mouse-ear cress)).